The chain runs to 87 residues: U3-theraphotoxin-Hhn1j (87 aa).

Positions 1–24 are cleaved as a signal peptide; that stretch reads MVNMKASMFLTFAGLVLLFVVCYA. Positions 25 to 52 are excised as a propeptide; sequence SESEEKEFPKEMLSSIFAVDNDFKQEER. 3 disulfides stabilise this stretch: Cys-54/Cys-67, Cys-61/Cys-72, and Cys-66/Cys-79.

The protein belongs to the neurotoxin 10 (Hwtx-1) family. 51 (Hntx-8) subfamily. Hntx-8 sub-subfamily. In terms of tissue distribution, expressed by the venom gland.

It localises to the secreted. Functionally, ion channel inhibitor. This Cyriopagopus hainanus (Chinese bird spider) protein is U3-theraphotoxin-Hhn1j.